A 456-amino-acid polypeptide reads, in one-letter code: NAD-dependent deacetylase sir2C (456 aa).

Residues 161 to 443 (IEIENNKIKE…LNLSKLLNWD (283 aa)) form the Deacetylase sirtuin-type domain. H294 functions as the Proton acceptor in the catalytic mechanism. Zn(2+)-binding residues include C302, C305, C331, and C336.

Belongs to the sirtuin family. Requires Zn(2+) as cofactor.

It catalyses the reaction N(6)-acetyl-L-lysyl-[protein] + NAD(+) + H2O = 2''-O-acetyl-ADP-D-ribose + nicotinamide + L-lysyl-[protein]. Functionally, NAD-dependent deacetylase, which plays an important role in the regulation of transcriptional repression. The polypeptide is NAD-dependent deacetylase sir2C (sir2C) (Dictyostelium discoideum (Social amoeba)).